The following is a 278-amino-acid chain: Thiazole synthase (278 aa).

The Schiff-base intermediate with DXP role is filled by Lys-109. Residues Gly-170, 197-198 (AG), and 219-220 (NT) contribute to the 1-deoxy-D-xylulose 5-phosphate site.

The protein belongs to the ThiG family. Homotetramer. Forms heterodimers with either ThiH or ThiS.

It is found in the cytoplasm. The enzyme catalyses [ThiS sulfur-carrier protein]-C-terminal-Gly-aminoethanethioate + 2-iminoacetate + 1-deoxy-D-xylulose 5-phosphate = [ThiS sulfur-carrier protein]-C-terminal Gly-Gly + 2-[(2R,5Z)-2-carboxy-4-methylthiazol-5(2H)-ylidene]ethyl phosphate + 2 H2O + H(+). It functions in the pathway cofactor biosynthesis; thiamine diphosphate biosynthesis. Its function is as follows. Catalyzes the rearrangement of 1-deoxy-D-xylulose 5-phosphate (DXP) to produce the thiazole phosphate moiety of thiamine. Sulfur is provided by the thiocarboxylate moiety of the carrier protein ThiS. In vitro, sulfur can be provided by H(2)S. The protein is Thiazole synthase of Cupriavidus pinatubonensis (strain JMP 134 / LMG 1197) (Cupriavidus necator (strain JMP 134)).